We begin with the raw amino-acid sequence, 189 residues long: Elongation factor P (189 aa).

This sequence belongs to the elongation factor P family.

The protein localises to the cytoplasm. The protein operates within protein biosynthesis; polypeptide chain elongation. Its function is as follows. Involved in peptide bond synthesis. Stimulates efficient translation and peptide-bond synthesis on native or reconstituted 70S ribosomes in vitro. Probably functions indirectly by altering the affinity of the ribosome for aminoacyl-tRNA, thus increasing their reactivity as acceptors for peptidyl transferase. This chain is Elongation factor P, found in Sinorhizobium medicae (strain WSM419) (Ensifer medicae).